A 444-amino-acid chain; its full sequence is E1B 55 kDa protein (444 aa).

Residues 1 to 42 form a disordered region; sequence MEQDSDLESGRATNQRPPRVRVRGAGVRGRGRVRRRALSEGQ. Phosphoserine is present on residues S438 and S439.

It belongs to the adenoviridae E1B 55 kDa protein family. In terms of assembly, interacts with host PML-4 and PML-5; this interaction promotes efficient subnuclear targeting of E1B-55K to PML nuclear bodies. Interacts with E4-ORF3 protein. Interacts with E4-ORF6 protein.

Its subcellular location is the host nucleus. The protein localises to the host cytoplasm. Functionally, plays a major role to prevent cellular inhibition of viral genome replication. Assembles an SCF-like E3 ubiquitin ligase complex based on the cellular proteins ELOB, ELOC, CUL5 and RBX1, in cooperation with viral E4orf6. This viral RING-type ligase ubiquitinates cellular substrates and targets them to proteasomal degradation: TP53/p53, LIG4, MRE11-RAD50-NBS1 (MRN) complex, ITGA3, DAXX and BLM. E1B-55K probably acts as the substrate-specific adapter of the SCF-like E3 ubiquitin ligase complex. Degradation of host TP53/p53 activity is essential for preventing E1A-induced TP53 accumulation that would otherwise lead to cell apoptosis and growth arrest. E1B-55K also inactivates TP53 transcription-factor activity by binding its transactivation domain. E1B-55K also functions as a SUMO1 E3 ligase for TP53 which causes the latter to be sequestered in promyelocytic leukemia (PML) nuclear bodies thereby contributing to maximal inhibition of TP53 function. In Canis lupus familiaris (Dog), this protein is E1B 55 kDa protein.